The following is a 412-amino-acid chain: MADNKRIVLAYSGGLDTSVAISYLKERTGKDVVAVSLDVGQGGESLETIKQRALACGAVESYVVDARDEFANEYCMKALKANAMYEGVYPLVSAISRPLISKHLVRAAHQFGADTISHGCTGKGNDQVRFEVSIASIDPTLKAISPIRDLSLTRDVEIAFAKEHKLPITQTEKSPYSIDQNVWGRAIETGFLEDPWNGPTKDCYSYTDDPAFPPVEDEVVIEFKEGVPVKIDGRDVTPLQAIEEMNRRAGAQGIGRIDLIEDRLVGIKSRELYEAPGAVALITAHQELENCCLEREQHRIKRDIDKRWGELVYDAQWFSPATQSLNAFIEDTQKYVSGEIRMVLHGGRAVVTGRRSDSSLYDYKLATYDSGDTFDQKSSNGFIDIYGLPSRVAAARDVKFGNGIEVPKNTVE.

10–18 (AYSGGLDTS) is a binding site for ATP. Tyr89 lines the L-citrulline pocket. Gly119 lines the ATP pocket. Residues Thr121, Asn125, and Asp126 each contribute to the L-aspartate site. Asn125 serves as a coordination point for L-citrulline. Positions 129, 177, 261, and 273 each coordinate L-citrulline.

The protein belongs to the argininosuccinate synthase family. Type 1 subfamily. Homotetramer.

The protein resides in the cytoplasm. It catalyses the reaction L-citrulline + L-aspartate + ATP = 2-(N(omega)-L-arginino)succinate + AMP + diphosphate + H(+). Its pathway is amino-acid biosynthesis; L-arginine biosynthesis; L-arginine from L-ornithine and carbamoyl phosphate: step 2/3. This chain is Argininosuccinate synthase, found in Bifidobacterium longum subsp. infantis (strain ATCC 15697 / DSM 20088 / JCM 1222 / NCTC 11817 / S12).